The primary structure comprises 454 residues: Tubulin gamma chain (454 aa).

Position 142-148 (142-148 (AGGTGSG)) interacts with GTP.

It belongs to the tubulin family.

The protein resides in the cytoplasm. It localises to the cytoskeleton. Its subcellular location is the microtubule organizing center. The protein localises to the spindle pole body. Its function is as follows. Tubulin is the major constituent of microtubules. The gamma chain is found at microtubule organizing centers (MTOC) such as the spindle pole or the centrosome, suggesting that it is involved in the minus-end nucleation of microtubule assembly. Interacts physically with beta-tubulin and is involved in microtubule function. In Emericella nidulans (strain FGSC A4 / ATCC 38163 / CBS 112.46 / NRRL 194 / M139) (Aspergillus nidulans), this protein is Tubulin gamma chain (mipA).